Consider the following 131-residue polypeptide: Cell cycle protein GpsB (131 aa).

Residues 39–76 (LDGIIRDYEAFTNEIDRLKEENTKLFSRVDELTKQLSV) adopt a coiled-coil conformation. The segment at 111-131 (KLSDSSVDNHDDGNHSDVDQY) is disordered. The segment covering 117-131 (VDNHDDGNHSDVDQY) has biased composition (basic and acidic residues).

Belongs to the GpsB family. In terms of assembly, forms polymers through the coiled coil domains. Interacts with PBP1, MreC and EzrA.

It is found in the cytoplasm. Functionally, divisome component that associates with the complex late in its assembly, after the Z-ring is formed, and is dependent on DivIC and PBP2B for its recruitment to the divisome. Together with EzrA, is a key component of the system that regulates PBP1 localization during cell cycle progression. Its main role could be the removal of PBP1 from the cell pole after pole maturation is completed. Also contributes to the recruitment of PBP1 to the division complex. Not essential for septum formation. This Lacticaseibacillus casei (strain BL23) (Lactobacillus casei) protein is Cell cycle protein GpsB.